The primary structure comprises 211 residues: Probable oligoribonuclease (211 aa).

Residues 38–202 (IVWMDLEMTG…DDIRESIKEL (165 aa)) enclose the Exonuclease domain. Tyr-159 is an active-site residue.

The protein belongs to the oligoribonuclease family.

3'-to-5' exoribonuclease specific for small oligoribonucleotides. In Drosophila melanogaster (Fruit fly), this protein is Probable oligoribonuclease.